Reading from the N-terminus, the 559-residue chain is Nicotinate phosphoribosyltransferase 1 (559 aa).

Nicotinate contacts are provided by Y33 and T221. H224 bears the Phosphohistidine mark. R331 provides a ligand contact to nicotinate. A 5-phospho-alpha-D-ribose 1-diphosphate-binding site is contributed by T393.

This sequence belongs to the NAPRTase family. The cofactor is Mg(2+). Mn(2+) serves as cofactor. Transiently phosphorylated on a His residue during the reaction cycle. Phosphorylation strongly increases the affinity for substrates and increases the rate of nicotinate D-ribonucleotide production. Dephosphorylation regenerates the low-affinity form of the enzyme, leading to product release.

It catalyses the reaction nicotinate + 5-phospho-alpha-D-ribose 1-diphosphate + ATP + H2O = nicotinate beta-D-ribonucleotide + ADP + phosphate + diphosphate. Its pathway is cofactor biosynthesis; NAD(+) biosynthesis; nicotinate D-ribonucleotide from nicotinate: step 1/1. Functionally, catalyzes the first step in the biosynthesis of NAD from nicotinic acid, the ATP-dependent synthesis of beta-nicotinate D-ribonucleotide from nicotinate and 5-phospho-D-ribose 1-phosphate. Helps prevent cellular oxidative stress via its role in NAD biosynthesis. This Arabidopsis thaliana (Mouse-ear cress) protein is Nicotinate phosphoribosyltransferase 1.